The primary structure comprises 797 residues: Short transient receptor potential channel 4-associated protein (797 aa).

N-acetylalanine is present on A2. Positions 2 to 400 (AAAPAAAGAG…VLYVLCVLLM (399 aa)) are interaction with TNFRSF1A.

Component of the DCX(TRPC4AP) E3 ubiquitin ligase complex, at least composed of CUL4A, DDB1, TRPC4AP/TRUSS and RBX1. Interacts with MYC. Constitutively associated with TNFRSF1A. Directly interacts with TRADD, TRAF2, CHUK, IKBKB and IKBKG. Interacts with TRPC1, TRPC4 and TRPC5. Phosphorylated by GSK3B; phosphorylation is required for ubiquitination. In terms of processing, ubiquitinated by a SCF (SKP1-CUL1-F-box protein) E3 ubiquitin-protein ligase containing SKP2, leading to its degradation. Phosphorylation by GSK3B is required for ubiquitination. Widely expressed, with high levels in heart, liver and testis.

Its subcellular location is the cytoplasm. It is found in the perinuclear region. Its pathway is protein modification; protein ubiquitination. Its function is as follows. Substrate-recognition component of a DCX (DDB1-CUL4-X-box) E3 ubiquitin-protein ligase complex required for cell cycle control. The DCX(TRPC4AP) complex specifically mediates the polyubiquitination and subsequent degradation of MYC as part of the DesCEND (destruction via C-end degrons) pathway. The DesCEND (destruction via C-end degrons) pathway recognizes a C-degron located at the extreme C terminus of target proteins, leading to their ubiquitination and degradation. The DCX(TRPC4AP) complex specifically recognizes proteins with an arginine at the minus 3 position (R-3 motif) at the C-terminus, such as MYC, leading to their ubiquitination and degradation. Also participates in the activation of NFKB1 in response to ligation of TNFRSF1A, possibly by linking TNFRSF1A to the IKK signalosome. Involved in JNK activation via its interaction with TRAF2. Also involved in elevation of endoplasmic reticulum Ca(2+) storage reduction in response to CHRM1. The polypeptide is Short transient receptor potential channel 4-associated protein (Mus musculus (Mouse)).